The sequence spans 63 residues: Chymotrypsin/elastase isoinhibitor 1 (63 aa).

Intrachain disulfides connect C5–C38, C14–C33, C17–C29, C21–C60, and C40–C54. Positions 5-60 (CGPNEVWTECTGCEMKCGPDENTPCPLMCRRPSCECSPGRGMRRTNDGKCIPASQC) constitute a TIL domain.

It belongs to the serine protease inhibitor-like (TIL domain-containing) family.

The protein resides in the secreted. Functionally, defends the organism against the host's proteinases. This chain is Chymotrypsin/elastase isoinhibitor 1, found in Ascaris suum (Pig roundworm).